Reading from the N-terminus, the 346-residue chain is Selenide, water dikinase (346 aa).

Residue Sec16 is part of the active site. Residue Sec16 is a non-standard amino acid, selenocysteine. ATP-binding positions include Lys19 and 47–49 (TAD). Asp50 contributes to the Mg(2+) binding site. Residues Asp67, Asp90, and 138–140 (GHS) contribute to the ATP site. Residue Asp90 participates in Mg(2+) binding. Asp226 is a Mg(2+) binding site.

The protein belongs to the selenophosphate synthase 1 family. Class I subfamily. Homodimer. Mg(2+) is required as a cofactor.

It carries out the reaction hydrogenselenide + ATP + H2O = selenophosphate + AMP + phosphate + 2 H(+). Synthesizes selenophosphate from selenide and ATP. The chain is Selenide, water dikinase from Haemophilus ducreyi (strain 35000HP / ATCC 700724).